Consider the following 66-residue polypeptide: Large ribosomal subunit protein bL33c (66 aa).

This sequence belongs to the bacterial ribosomal protein bL33 family.

It localises to the plastid. The protein localises to the chloroplast. In Nandina domestica (Heavenly bamboo), this protein is Large ribosomal subunit protein bL33c.